Reading from the N-terminus, the 148-residue chain is Hemoglobin subunit beta (148 aa).

In terms of domain architecture, Globin spans 3–148 (DWTDAERSAI…VVSALGRQYH (146 aa)). Heme b contacts are provided by His64 and His93.

Belongs to the globin family. Heterotetramer of two alpha chains and two beta chains. In terms of tissue distribution, red blood cells.

Functionally, involved in oxygen transport from gills to the various peripheral tissues. The polypeptide is Hemoglobin subunit beta (hbb) (Oncorhynchus nerka (Sockeye salmon)).